An 86-amino-acid polypeptide reads, in one-letter code: F(1)-ATPase inhibitor STF1, mitochondrial (86 aa).

The transit peptide at 1-23 (MLNRCISRNTRLPVNLRIASRFY) directs the protein to the mitochondrion. S24 carries the post-translational modification Phosphoserine.

The protein belongs to the ATPase inhibitor family. As to quaternary structure, monomer and homodimer. Monomeric at pH 5.0 and dimeric at either pH 6.5 or 8.0. The protein aggregates increasingly strongly with increasing pH.

The protein resides in the mitochondrion. Functionally, endogenous low-affinity ATPase inhibitor, which inhibits specifically the reverse ATPase reaction of mitochondrial F(1)F(0)-type ATP synthase. Found to stabilize, together with STF2, a complex of intrinsic ATPase inhibitor INH1 and proton-translocating ATPase in mitochondrial membranes. Binds directly to purified F1-ATPase. The sequence is that of F(1)-ATPase inhibitor STF1, mitochondrial (STF1) from Saccharomyces cerevisiae (strain ATCC 204508 / S288c) (Baker's yeast).